Here is a 118-residue protein sequence, read N- to C-terminus: Ribosome-binding factor A (118 aa).

This sequence belongs to the RbfA family. As to quaternary structure, monomer. Binds 30S ribosomal subunits, but not 50S ribosomal subunits or 70S ribosomes.

Its subcellular location is the cytoplasm. One of several proteins that assist in the late maturation steps of the functional core of the 30S ribosomal subunit. Associates with free 30S ribosomal subunits (but not with 30S subunits that are part of 70S ribosomes or polysomes). Required for efficient processing of 16S rRNA. May interact with the 5'-terminal helix region of 16S rRNA. The polypeptide is Ribosome-binding factor A (Bacillus cereus (strain ATCC 10987 / NRS 248)).